The primary structure comprises 238 residues: tRNA (guanine-N(7)-)-methyltransferase (238 aa).

Glutamate 68, glutamate 93, aspartate 120, and aspartate 143 together coordinate S-adenosyl-L-methionine. Aspartate 143 is an active-site residue. Residues lysine 147, aspartate 179, and 216-219 each bind substrate; that span reads TKFE.

It belongs to the class I-like SAM-binding methyltransferase superfamily. TrmB family.

It carries out the reaction guanosine(46) in tRNA + S-adenosyl-L-methionine = N(7)-methylguanosine(46) in tRNA + S-adenosyl-L-homocysteine. It participates in tRNA modification; N(7)-methylguanine-tRNA biosynthesis. Functionally, catalyzes the formation of N(7)-methylguanine at position 46 (m7G46) in tRNA. The protein is tRNA (guanine-N(7)-)-methyltransferase of Shewanella putrefaciens (strain CN-32 / ATCC BAA-453).